A 333-amino-acid polypeptide reads, in one-letter code: Adenosine deaminase (333 aa).

The Zn(2+) site is built by His12 and His14. Substrate contacts are provided by His14, Asp16, and Gly170. His197 provides a ligand contact to Zn(2+). The active-site Proton donor is the Glu200. Residue Asp278 participates in Zn(2+) binding. Residue Asp279 coordinates substrate.

This sequence belongs to the metallo-dependent hydrolases superfamily. Adenosine and AMP deaminases family. Adenosine deaminase subfamily. It depends on Zn(2+) as a cofactor.

The enzyme catalyses adenosine + H2O + H(+) = inosine + NH4(+). It catalyses the reaction 2'-deoxyadenosine + H2O + H(+) = 2'-deoxyinosine + NH4(+). Catalyzes the hydrolytic deamination of adenosine and 2-deoxyadenosine. In Klebsiella pneumoniae subsp. pneumoniae (strain ATCC 700721 / MGH 78578), this protein is Adenosine deaminase.